Here is a 543-residue protein sequence, read N- to C-terminus: Glutamyl-tRNA(Gln) amidotransferase subunit A, chloroplastic/mitochondrial (543 aa).

Residues K121 and S196 each act as charge relay system in the active site. S220 functions as the Acyl-ester intermediate in the catalytic mechanism.

It belongs to the amidase family. GatA subfamily. Subunit of the heterotrimeric GatCAB amidotransferase (AdT) complex, composed of A, B and C subunits.

The protein resides in the mitochondrion. It is found in the plastid. Its subcellular location is the chloroplast stroma. The enzyme catalyses L-glutamyl-tRNA(Gln) + L-glutamine + ATP + H2O = L-glutaminyl-tRNA(Gln) + L-glutamate + ADP + phosphate + H(+). Allows the formation of correctly charged Gln-tRNA(Gln) through the transamidation of misacylated Glu-tRNA(Gln) in chloroplasts and mitochondria. The reaction takes place in the presence of glutamine and ATP through an activated gamma-phospho-Glu-tRNA(Gln). This is Glutamyl-tRNA(Gln) amidotransferase subunit A, chloroplastic/mitochondrial from Zea mays (Maize).